The sequence spans 144 residues: Transcriptional regulator SlyA (144 aa).

Residues 2-135 enclose the HTH marR-type domain; it reads ESPLGSDLAR…LLHLIRKLEQ (134 aa). Residues 49–72 constitute a DNA-binding region (H-T-H motif); sequence QIQLAKAIGIEQPSLVRTLDQLEE.

Belongs to the SlyA family. In terms of assembly, homodimer.

Transcription regulator that can specifically activate or repress expression of target genes. The protein is Transcriptional regulator SlyA of Klebsiella pneumoniae (strain 342).